A 382-amino-acid polypeptide reads, in one-letter code: MVKILPPTASIDWDQISIATNLGLGHVESTYHMSTGRWSDPVFVNDPYLRVHGLAPGLQYAFRTPKGRVSIFRPDKHAKRMSHSTSTISIPNIPESLFLASVELAVTSNSSYVPPHTSRAMLYIRPFAFGSSEMIGLVPPSEYKFCVYVKPVPAYHGLSAQDALILTGFDRAAPHGLGHAKVGGNYAPVIKWSEQAKADGFGMTLHLDSKTRTEIDEFSTSGFLGIKVSDEGAVKVVAPSSPCIIDSTTSDCCLQLARHYGWNVEKRPIKYTELPEFSEVVAVGTAASVVSIRSITLEDSRETVRYLDATTNQGRYARKLSTSLDDIMHCRVEDVFGWCHQVGEAPVEDVPTRKMGSSNKKPAFVDIMTLSCAGQGARFSCH.

R80 contacts pyridoxal 5'-phosphate. The residue at position 181 (K181) is an N6-(pyridoxal phosphate)lysine. Position 217 (E217) interacts with pyridoxal 5'-phosphate.

The protein belongs to the class-IV pyridoxal-phosphate-dependent aminotransferase family. Requires pyridoxal 5'-phosphate as cofactor.

Its pathway is mycotoxin biosynthesis. Aminotransferase; part of the gene cluster that mediates the biosynthesis of gramillins A and B, bicyclic lipopeptides that induce cell death in maize leaves but not in wheat leaves. The nonribosomal peptide synthetase GRA1 incorporates respectively a glutamic adic (Glu), a leucine (Leu), a serine (Ser), a hydroxyglutamine (HOGln), a 2-amino decanoic acid, and 2 cysteins (CysB and CysA). The biosynthesis of 2-amino decanoic acid incorporated in gramillins could be initiated by a fatty acid synthase composed of the alpha and beta subunits FGSG_00036 and FGSG_11656. The cytochrome P450 monooxygenase FGSG_15680 could hydroxylate the fatty acid chain. Subsequent oxidation to the ketone by the oxidoreductase FGSG_00048 and transamination by aminotransferase FGSG_00049 could form 2-amino-decanoic acid. On the other hand, FGSG_15680 could also be responsible for the HO-modified glutamine at the gamma-position. Whether hydroxylation occurs on the fully assembled product or on the Gln residue prior to assembly into the gramillins requires further proof. The thioredoxin FGSG_00043 could also be required for the disulfide-bond formation between CysA and CysB. The specific involvement of the remaining proteins from the cluster is more difficult to discern, but could have broader regulatory (FGSG_00040 and FGSG_11657) or enzymatic functions (FGSG_00044 and FGSG_00045). The final C-domain of GRA1 does not possess the expected sequence of a termination CT domain, often implicated in macrocyclization and release of a cyclopeptidein fungal NRPs; and the thioesterase FGSG_00047 may act in concert with the terminal C-domain of GRA1 to catalyze the formation of the macrocyclic anhydride and release of the products. This chain is Aminotransferase FGSG_00049, found in Gibberella zeae (strain ATCC MYA-4620 / CBS 123657 / FGSC 9075 / NRRL 31084 / PH-1) (Wheat head blight fungus).